Reading from the N-terminus, the 381-residue chain is Regulatory protein RapF (381 aa).

The Mn(2+) site is built by leucine 40, methionine 43, and glutamate 45. 6 TPR repeats span residues tyrosine 101–arginine 137, serine 148–leucine 181, leucine 182–glutamate 215, glycine 222–serine 255, proline 262–alanine 295, and glutamate 337–isoleucine 370.

This sequence belongs to the Rap family. Monomer. Is monomeric either alone or in complex with PhrF. Interacts specifically with the C-terminal DNA-binding domain of ComA. Interacts with PhrF.

It is found in the cytoplasm. Its activity is regulated as follows. Inhibited by PhrF, which prevents RapF-ComA interaction. Interaction with PhrF induces a conformational change in RapF, which is propagated to the ComA binding site and causes the dissociation of ComA from RapF. Functionally, involved in the regulation of genetic competence development. Inhibits the activity of ComA, a transcriptional factor that regulates the development of genetic competence. Acts by binding to ComA, leading to the inhibition of its DNA-binding activity. May also affect transcription independently of ComA. This Bacillus subtilis (strain 168) protein is Regulatory protein RapF (rapF).